The sequence spans 59 residues: Potassium channel toxin alpha-KTx 3.5 (59 aa).

Positions 1-22 (MKVFSAVLIILFVCSMIIGINA) are cleaved as a signal peptide. 3 disulfides stabilise this stretch: C29–C49, C35–C54, and C39–C56. Residues 47-54 (GKCMNGKC) are interaction with Ca(2+)-activated K(+) channels.

It belongs to the short scorpion toxin superfamily. Potassium channel inhibitor family. Alpha-KTx 03 subfamily. As to expression, expressed by the venom gland.

It localises to the secreted. Functionally, has also been shown to inhibit with high potency Kv1.3/KCNA3 and with low potency Kv1.1/KCNA1 and Kv1.2/KCNA2 voltage-gated potassium channels. Also binds and inhibits the molluscan calcium-activated potassium channels KCa (Kd=135 nM). The chain is Potassium channel toxin alpha-KTx 3.5 (KTX2) from Androctonus australis (Sahara scorpion).